Consider the following 494-residue polypeptide: Gabija protein GajB (494 aa).

Residues 1 to 229 (MSREQIIKDG…YHLTSNFRCC (229 aa)) form the UvrD-like helicase ATP-binding domain. 17-24 (AGAGSGKT) serves as a coordination point for ATP.

It belongs to the helicase family. In terms of assembly, homodimer. Interacts with GajA; 2 GajB dimers dock at opposite sides of the GajA complex to form a 4:4 GajA-GajB assembly (GajAB). GajAB interacts with Bacillus phage Phi3T Gad1 protein; this interaction forms a 4:4:8 GajAB-Gad1 complex and leads to GajAB inhibition.

Functionally, component of antiviral defense system Gabija type I, composed of GajA and GajB. Expression of Gabija type I in B.subtilis (strain BEST7003) confers resistance to phages phi105, phi29, rho14, SpBeta and SBSphiC. Expression of Gabija type I in E.coli B (strain ATCC 11303) confers resistance to phage T7. May be a helicase or contribute to GajA activation. The chain is Gabija protein GajB from Bacillus cereus (strain VD045).